Reading from the N-terminus, the 207-residue chain is LexA repressor (207 aa).

Residues 28–48 (VREIGEAVGLASSFTVHGHLS) constitute a DNA-binding region (H-T-H motif). Active-site for autocatalytic cleavage activity residues include serine 130 and lysine 168.

The protein belongs to the peptidase S24 family. In terms of assembly, homodimer.

The catalysed reaction is Hydrolysis of Ala-|-Gly bond in repressor LexA.. Represses a number of genes involved in the response to DNA damage (SOS response), including recA and lexA. In the presence of single-stranded DNA, RecA interacts with LexA causing an autocatalytic cleavage which disrupts the DNA-binding part of LexA, leading to derepression of the SOS regulon and eventually DNA repair. The sequence is that of LexA repressor from Staphylococcus aureus (strain Newman).